We begin with the raw amino-acid sequence, 292 residues long: Protease HtpX (292 aa).

Helical transmembrane passes span 5 to 25 (VVLFLLTNFAVLILAGIVMSV) and 34 to 54 (SGLLVMAAIFGFGGSFISLLL). A Zn(2+)-binding site is contributed by histidine 140. Glutamate 141 is a catalytic residue. Histidine 144 serves as a coordination point for Zn(2+). 2 consecutive transmembrane segments (helical) span residues 155-175 (LLQGVLNTFVIVLARVVGGII) and 193-213 (IIVFVLEMVFGLFATMIAMWF). Glutamate 218 contributes to the Zn(2+) binding site.

The protein belongs to the peptidase M48B family. The cofactor is Zn(2+).

The protein localises to the cell inner membrane. The chain is Protease HtpX from Xanthomonas campestris pv. campestris (strain B100).